Here is a 214-residue protein sequence, read N- to C-terminus: MRILDLFSGTHSVPKACAQREGWSCVTVDLADSDYNVDVLEWDYTKDLKPREFDVVWASPPCRYFSKLRESNIGRGGMTKKSVKEDLETKGLPLLRRAMEIIAYLQPKKFIVENPDTGRMKEYITEWPHYVVDYCAYSDWGYRKRTRLWTDIEGFVPKTCAGKESCPNMERNPSSGRWRHVLATDAGGRGRKGTTRRLRYRVPPAIIVELLDLC.

Cysteine 62 is an active-site residue.

It belongs to the class I-like SAM-binding methyltransferase superfamily. C5-methyltransferase family. As to quaternary structure, probably requires another subunit for function.

It catalyses the reaction a 2'-deoxycytidine in DNA + S-adenosyl-L-methionine = a 5-methyl-2'-deoxycytidine in DNA + S-adenosyl-L-homocysteine + H(+). This is probably the methylase that recognizes and modifies 5'-CpG-3'. This chain is Probable DNA (cytosine-5)-methyltransferase, found in Dryophytes versicolor (chameleon treefrog).